The sequence spans 147 residues: uncharacterized protein (147 aa).

2 helical membrane-spanning segments follow: residues 35 to 55 (TIQL…FGNH) and 62 to 82 (IWLL…LFEP).

As to quaternary structure, has been detected in a cytochrome bc1-aa3 supercomplex; its deletion however leaves complex activity unaffected.

The protein localises to the cell membrane. This is an uncharacterized protein from Corynebacterium glutamicum (strain ATCC 13032 / DSM 20300 / JCM 1318 / BCRC 11384 / CCUG 27702 / LMG 3730 / NBRC 12168 / NCIMB 10025 / NRRL B-2784 / 534).